The chain runs to 336 residues: Probable GTPase MT1543 (336 aa).

GTP contacts are provided by residues 67-75 (GVPGVGKST), Asp-209, and 245-247 (SAV).

This sequence belongs to the SIMIBI class G3E GTPase family. ArgK/MeaB subfamily. Homodimer.

In terms of biological role, probable GTPase. May also bind and hydrolyze ATP. May function as chaperone. This Mycobacterium tuberculosis (strain CDC 1551 / Oshkosh) protein is Probable GTPase MT1543.